The sequence spans 162 residues: Phosphopantetheine adenylyltransferase (162 aa).

A substrate-binding site is contributed by S11. ATP is bound by residues 11-12 (SF) and H19. Residues K43, V76, and R90 each contribute to the substrate site. ATP contacts are provided by residues 91–93 (GLR), E101, and 126–132 (HLYISSS).

This sequence belongs to the bacterial CoaD family. Homohexamer. Requires Mg(2+) as cofactor.

Its subcellular location is the cytoplasm. The enzyme catalyses (R)-4'-phosphopantetheine + ATP + H(+) = 3'-dephospho-CoA + diphosphate. The protein operates within cofactor biosynthesis; coenzyme A biosynthesis; CoA from (R)-pantothenate: step 4/5. Its function is as follows. Reversibly transfers an adenylyl group from ATP to 4'-phosphopantetheine, yielding dephospho-CoA (dPCoA) and pyrophosphate. This chain is Phosphopantetheine adenylyltransferase, found in Streptococcus pneumoniae (strain JJA).